The sequence spans 73 residues: MSTETASGPTEDQVEILEYNFNKVNKHPDPTTLCLIAAEAGLSEEETQKWFKQRLAQWRRSEGLPSECRSVTD.

The homeobox; degenerate DNA-binding region spans 3–62 (TETASGPTEDQVEILEYNFNKVNKHPDPTTLCLIAAEAGLSEEETQKWFKQRLAQWRRSE).

As to quaternary structure, interacts with serum response factor (SRF). Component of a large complex containing histone deacetylases such as HDAC2. Interacts with the acetylated forms of HSPA1A and HSPA1B. Interacts with HSPA8.

The protein localises to the nucleus. It localises to the cytoplasm. Atypical homeodomain protein which does not bind DNA and is required to modulate cardiac growth and development. Acts via its interaction with SRF, thereby modulating the expression of SRF-dependent cardiac-specific genes and cardiac development. Prevents SRF-dependent transcription either by inhibiting SRF binding to DNA or by recruiting histone deacetylase (HDAC) proteins that prevent transcription by SRF. Overexpression causes cardiac hypertrophy. Acts as a co-chaperone for HSPA1A and HSPA1B chaperone proteins and assists in chaperone-mediated protein refolding. The sequence is that of Homeodomain-only protein (HOPX) from Bos taurus (Bovine).